The following is a 459-amino-acid chain: Cysteine--tRNA ligase (459 aa).

Cys-28 serves as a coordination point for Zn(2+). Residues Val-30 to His-40 carry the 'HIGH' region motif. Cys-209, His-234, and Glu-238 together coordinate Zn(2+). Positions Lys-266–Ser-270 match the 'KMSKS' region motif. Residue Lys-269 participates in ATP binding.

The protein belongs to the class-I aminoacyl-tRNA synthetase family. As to quaternary structure, monomer. Zn(2+) is required as a cofactor.

Its subcellular location is the cytoplasm. The enzyme catalyses tRNA(Cys) + L-cysteine + ATP = L-cysteinyl-tRNA(Cys) + AMP + diphosphate. In Haemophilus influenzae (strain 86-028NP), this protein is Cysteine--tRNA ligase.